Reading from the N-terminus, the 410-residue chain is Multifunctional CCA protein (410 aa).

Gly-8 and Arg-11 together coordinate ATP. Positions 8 and 11 each coordinate CTP. Mg(2+) is bound by residues Glu-21 and Asp-23. Arg-91, Arg-137, and Arg-140 together coordinate ATP. Positions 91, 137, and 140 each coordinate CTP. Residues 228 to 329 enclose the HD domain; it reads TGIHSLMALR…VKLLEQVDAF (102 aa).

The protein belongs to the tRNA nucleotidyltransferase/poly(A) polymerase family. Bacterial CCA-adding enzyme type 1 subfamily. Monomer. Can also form homodimers and oligomers. The cofactor is Mg(2+). Ni(2+) serves as cofactor.

It carries out the reaction a tRNA precursor + 2 CTP + ATP = a tRNA with a 3' CCA end + 3 diphosphate. The enzyme catalyses a tRNA with a 3' CCA end + 2 CTP + ATP = a tRNA with a 3' CCACCA end + 3 diphosphate. In terms of biological role, catalyzes the addition and repair of the essential 3'-terminal CCA sequence in tRNAs without using a nucleic acid template. Adds these three nucleotides in the order of C, C, and A to the tRNA nucleotide-73, using CTP and ATP as substrates and producing inorganic pyrophosphate. tRNA 3'-terminal CCA addition is required both for tRNA processing and repair. Also involved in tRNA surveillance by mediating tandem CCA addition to generate a CCACCA at the 3' terminus of unstable tRNAs. While stable tRNAs receive only 3'-terminal CCA, unstable tRNAs are marked with CCACCA and rapidly degraded. The sequence is that of Multifunctional CCA protein from Legionella pneumophila (strain Paris).